The primary structure comprises 280 residues: Nucleotide-binding protein Mfla_0145 (280 aa).

8-15 contacts ATP; that stretch reads GLSGSGKS. 57–60 lines the GTP pocket; that stretch reads DTRS.

It belongs to the RapZ-like family.

Its function is as follows. Displays ATPase and GTPase activities. In Methylobacillus flagellatus (strain ATCC 51484 / DSM 6875 / VKM B-1610 / KT), this protein is Nucleotide-binding protein Mfla_0145.